A 475-amino-acid polypeptide reads, in one-letter code: Ribulose bisphosphate carboxylase large chain (475 aa).

The propeptide occupies 1–2 (MS). P3 is subject to N-acetylproline. Position 14 is an N6,N6,N6-trimethyllysine (K14). Substrate is bound by residues N123 and T173. K175 serves as the catalytic Proton acceptor. Residue K177 participates in substrate binding. The Mg(2+) site is built by K201, D203, and E204. K201 carries the N6-carboxylysine modification. Catalysis depends on H294, which acts as the Proton acceptor. Substrate-binding residues include R295, H327, and S379.

This sequence belongs to the RuBisCO large chain family. Type I subfamily. As to quaternary structure, heterohexadecamer of 8 large chains and 8 small chains; disulfide-linked. The disulfide link is formed within the large subunit homodimers. It depends on Mg(2+) as a cofactor. In terms of processing, the disulfide bond which can form in the large chain dimeric partners within the hexadecamer appears to be associated with oxidative stress and protein turnover.

The protein resides in the plastid. Its subcellular location is the chloroplast. The catalysed reaction is 2 (2R)-3-phosphoglycerate + 2 H(+) = D-ribulose 1,5-bisphosphate + CO2 + H2O. It catalyses the reaction D-ribulose 1,5-bisphosphate + O2 = 2-phosphoglycolate + (2R)-3-phosphoglycerate + 2 H(+). Functionally, ruBisCO catalyzes two reactions: the carboxylation of D-ribulose 1,5-bisphosphate, the primary event in carbon dioxide fixation, as well as the oxidative fragmentation of the pentose substrate in the photorespiration process. Both reactions occur simultaneously and in competition at the same active site. In Buxus microphylla (Littleleaf boxwood), this protein is Ribulose bisphosphate carboxylase large chain.